The following is a 31-amino-acid chain: Putative translational regulatory protein ArgL (31 aa).

Functionally, may serve a regulatory role in expression of downstream gene argF; in an argL-argF-lacZ fusion mutation of the start codon to a stop codon in argL increases expression of beta-galactosidase. This chain is Putative translational regulatory protein ArgL, found in Escherichia coli (strain K12).